We begin with the raw amino-acid sequence, 662 residues long: ABC transporter G family member 17 (662 aa).

The region spanning 22–276 (LAFNDLTYNV…FSEFGSPIPE (255 aa)) is the ABC transporter domain. Residue 69–76 (GASGAGKS) participates in ATP binding. Residues 356 to 566 (VETVILAKRY…PYEAVLHNEF (211 aa)) enclose the ABC transmembrane type-2 domain. A run of 6 helical transmembrane segments spans residues 375-395 (LIGT…TVYW), 410-430 (FFSF…PAFI), 451-471 (VISH…GFAA), 486-508 (FIYY…TFVS), 514-536 (VMMS…GFYV), and 635-655 (LWVT…SLLL).

The protein belongs to the ABC transporter superfamily. ABCG family. Eye pigment precursor importer (TC 3.A.1.204) subfamily.

Its subcellular location is the membrane. The chain is ABC transporter G family member 17 (ABCG17) from Arabidopsis thaliana (Mouse-ear cress).